Reading from the N-terminus, the 333-residue chain is Mitochondrial glycine transporter (333 aa).

A disordered region spans residues 1 to 25; it reads MTNAATDKSVASVARDVSTGKPGKS. 3 Solcar repeats span residues 26 to 109, 127 to 220, and 236 to 319; these read PDAA…MRAA, LLPM…FKND, and RSSV…LIKS. Helical transmembrane passes span 32 to 57, 84 to 110, 133 to 158, 195 to 218, 240 to 266, and 294 to 312; these read LLSGGLAGLTSAVTLQPFDLLKTRLQ, GAVPSALRTSVGAGLYFTTLSKMRAAV, LATGFVARAIVGYITMPITMVKTRFE, GSVATLARDCPYAGLYVLFYEGFK, INSSSAILAASVSTTITAPFDAIKTRL, and GLSLRFGRKALSAGISWCI.

Belongs to the mitochondrial carrier (TC 2.A.29) family. SLC25A38 subfamily.

Its subcellular location is the mitochondrion inner membrane. The catalysed reaction is glycine(in) = glycine(out). Functionally, mitochondrial glycine transporter that imports glycine into the mitochondrial matrix. Plays an important role in providing glycine for the first enzymatic step in heme biosynthesis, the condensation of glycine with succinyl-CoA to produce 5-aminolevulinate (ALA) in the mitochondrial matrix. This Scheffersomyces stipitis (strain ATCC 58785 / CBS 6054 / NBRC 10063 / NRRL Y-11545) (Yeast) protein is Mitochondrial glycine transporter.